Reading from the N-terminus, the 182-residue chain is MIFDEFSIKTLIRPVPDFPKPGVVFRDITPLFQSPRALRMVADSFIQRYVEAEFSHIGAMDARGFLIGSIIAYELNKPLILFRKQGKLPADVLSESYQTEYGEAFLEVHSDSLCEGDSVLIFDDLIATGGTLIAAANLVRRMRASVFEAAAIIDLPELGGSQKLQDAAIPTFTLTAFALDDR.

The protein belongs to the purine/pyrimidine phosphoribosyltransferase family. In terms of assembly, homodimer.

The protein resides in the cytoplasm. The enzyme catalyses AMP + diphosphate = 5-phospho-alpha-D-ribose 1-diphosphate + adenine. Its pathway is purine metabolism; AMP biosynthesis via salvage pathway; AMP from adenine: step 1/1. Its function is as follows. Catalyzes a salvage reaction resulting in the formation of AMP, that is energically less costly than de novo synthesis. The protein is Adenine phosphoribosyltransferase of Ectopseudomonas mendocina (strain ymp) (Pseudomonas mendocina).